A 310-amino-acid polypeptide reads, in one-letter code: Ribosomal RNA small subunit methyltransferase H (310 aa).

S-adenosyl-L-methionine is bound by residues 33 to 35 (GGH), Asp-52, Phe-79, Asp-98, and Gln-105.

Belongs to the methyltransferase superfamily. RsmH family.

The protein localises to the cytoplasm. The catalysed reaction is cytidine(1402) in 16S rRNA + S-adenosyl-L-methionine = N(4)-methylcytidine(1402) in 16S rRNA + S-adenosyl-L-homocysteine + H(+). Its function is as follows. Specifically methylates the N4 position of cytidine in position 1402 (C1402) of 16S rRNA. The chain is Ribosomal RNA small subunit methyltransferase H from Campylobacter jejuni subsp. jejuni serotype O:6 (strain 81116 / NCTC 11828).